The primary structure comprises 205 residues: Cytochrome c biogenesis ATP-binding export protein CcmA (205 aa).

The 203-residue stretch at 2 to 204 (LEVSNLTAIR…SPKLRKIKLG (203 aa)) folds into the ABC transporter domain. Residue 34–41 (GRNGTGKT) participates in ATP binding.

This sequence belongs to the ABC transporter superfamily. CcmA exporter (TC 3.A.1.107) family. In terms of assembly, the complex is composed of two ATP-binding proteins (CcmA) and two transmembrane proteins (CcmB).

The protein resides in the cell inner membrane. It carries out the reaction heme b(in) + ATP + H2O = heme b(out) + ADP + phosphate + H(+). Its function is as follows. Part of the ABC transporter complex CcmAB involved in the biogenesis of c-type cytochromes; once thought to export heme, this seems not to be the case, but its exact role is uncertain. Responsible for energy coupling to the transport system. The protein is Cytochrome c biogenesis ATP-binding export protein CcmA of Vibrio parahaemolyticus serotype O3:K6 (strain RIMD 2210633).